The following is a 254-amino-acid chain: Ribosomal RNA small subunit methyltransferase G (254 aa).

S-adenosyl-L-methionine-binding positions include glycine 84, phenylalanine 89, 136 to 137, and arginine 155; that span reads VE.

It belongs to the methyltransferase superfamily. RNA methyltransferase RsmG family.

It localises to the cytoplasm. Its function is as follows. Specifically methylates the N7 position of a guanine in 16S rRNA. This chain is Ribosomal RNA small subunit methyltransferase G, found in Synechococcus sp. (strain CC9311).